Consider the following 236-residue polypeptide: UPF0502 protein Bcenmc03_4618 (236 aa).

Belongs to the UPF0502 family.

The protein is UPF0502 protein Bcenmc03_4618 of Burkholderia orbicola (strain MC0-3).